Consider the following 355-residue polypeptide: F-box only protein 32 (355 aa).

The Nuclear localization signal motif lies at 62 to 67 (KKRKKD). Positions 169 to 173 (LLQTL) match the Nuclear export signal motif. An F-box domain is found at 223 to 271 (LTITDLPVCLQLNIMQRLSDGRDLVSLGQAAPDLHVLSEDRLLWKRLCQ). Positions 280-295 (RKRLILSDKGQLDWKK) match the Bipartite nuclear localization signal motif.

As to quaternary structure, part of the SCF (SKP1-CUL1-F-box) E3 ubiquitin-protein ligase complex SCF(FBXO32) formed of CUL1, SKP1, RBX1 and FBXO32. As to expression, specifically expressed in cardiac and skeletal muscle.

The protein localises to the cytoplasm. It is found in the nucleus. Its pathway is protein modification; protein ubiquitination. In terms of biological role, substrate recognition component of a SCF (SKP1-CUL1-F-box protein) E3 ubiquitin-protein ligase complex which mediates the ubiquitination and subsequent proteasomal degradation of target proteins. Probably recognizes and binds to phosphorylated target proteins during skeletal muscle atrophy. Recognizes TERF1. The protein is F-box only protein 32 (Fbxo32) of Mus musculus (Mouse).